A 353-amino-acid polypeptide reads, in one-letter code: Guanine nucleotide-binding protein alpha-3 subunit (353 aa).

A lipid anchor (N-myristoyl glycine) is attached at G2. C4 carries S-palmitoyl cysteine lipidation. In terms of domain architecture, G-alpha spans 32-353; sequence KVVKLLLLGA…IQANLQGCGL (322 aa). The G1 motif stretch occupies residues 35–48; sequence KLLLLGAGECGKST. Residues 40 to 47, 176 to 182, 201 to 205, 270 to 273, and A326 each bind GTP; these read GAGECGKS, LLSRIKT, DVGGQ, and NKKD. Residues S47 and T182 each contribute to the Mg(2+) site. A G2 motif region spans residues 174–182; the sequence is DILLSRIKT. Positions 197–206 are G3 motif; it reads FRVFDVGGQR. Residues 266-273 are G4 motif; that stretch reads ILFLNKKD. Positions 324-329 are G5 motif; it reads TCATDT.

This sequence belongs to the G-alpha family. G(q) subfamily. G proteins are composed of 3 units; alpha, beta and gamma. The alpha chain contains the guanine nucleotide binding site.

Guanine nucleotide-binding proteins (G proteins) are involved as modulators or transducers in various transmembrane signaling systems. Promotes transcription of 3',5'-cyclic phosphodiesterases pde-1 and pde-5, leading to reduced cGMP levels in sensory neurons. This causes suppression of insulin production and signaling which leads to increased daf-16 activity and contributes to increased adult lifespan and resistance to oxidative stress. In addition, by reducing cGMP levels, inhibits TGF-beta signaling pathways. Involved in behavioral response to P.aeruginosa by controlling the expression of daf-7, a member of the TGF-beta family, in ASJ sensory neurons. Plays a role in the avoidance response to the noxious chemical quinine in ASH sensory neurons. This chain is Guanine nucleotide-binding protein alpha-3 subunit, found in Caenorhabditis elegans.